The following is a 468-amino-acid chain: Citrate synthase, mitochondrial (468 aa).

The transit peptide at 1–30 (MSLITAGRLCARILGAKNSPCALIAARQAS) directs the protein to the mitochondrion. Active-site residues include histidine 303 and histidine 349. Residue arginine 358 coordinates oxaloacetate. Residue aspartate 404 is part of the active site. Oxaloacetate contacts are provided by arginine 430 and arginine 450.

Belongs to the citrate synthase family. Homodimer.

It localises to the mitochondrion matrix. It carries out the reaction oxaloacetate + acetyl-CoA + H2O = citrate + CoA + H(+). It participates in carbohydrate metabolism; tricarboxylic acid cycle; isocitrate from oxaloacetate: step 1/2. In terms of biological role, key enzyme of the Krebs tricarboxylic acid cycle which catalyzes the synthesis of citrate from acetyl coenzyme A and oxaloacetate. In Xenopus tropicalis (Western clawed frog), this protein is Citrate synthase, mitochondrial (cs).